A 115-amino-acid polypeptide reads, in one-letter code: Type 3 secretion system chaperone YscG (115 aa).

Belongs to the YscG family. In terms of assembly, component of the heterodimeric YscE-YscG chaperone. The YscE-YscG chaperone forms a stable ternary complex with YscF/SctF.

It localises to the cytoplasm. Its function is as follows. Chaperone of the type III secretion system (T3SS), also called injectisome, which is used to inject bacterial effector proteins into eukaryotic host cells. Along with YscE, prevents premature polymerization of the YscF/SctF needle protein within the cytoplasm. Required for Yop secretion. The protein is Type 3 secretion system chaperone YscG of Yersinia enterocolitica.